Consider the following 306-residue polypeptide: Serine/threonine-protein phosphatase 2A catalytic subunit A (306 aa).

Asp54, His56, Asp82, and Asn114 together coordinate Mn(2+). His115 serves as the catalytic Proton donor. Mn(2+)-binding residues include His164 and His238. Leu306 is modified (leucine methyl ester).

This sequence belongs to the PPP phosphatase family. PP-2A subfamily. As to quaternary structure, PP2A consists of a trimeric holoenzyme, composed of a 37 kDa catalytic subunit (C subunit) and a 65 kDa constant regulatory subunit (A subunit), that associates with a variety of regulatory subunits (B subunit) such as phr2AB (B55) and psrA (B56 homolog). The trimer may partially dissociates into a core 'AC' dimer equally active compared to the trimer. The cofactor is Mn(2+). Post-translationally, reversibly methyl esterified on Leu-306 by leucine carboxyl methyltransferase 1 (LCMT) and protein phosphatase methylesterase 1 (PPME1). Carboxyl methylation influences the affinity of the catalytic subunit for the different regulatory subunits, thereby modulating the PP2A holoenzyme's substrate specificity, enzyme activity and cellular localization.

The protein resides in the cytoplasm. Its subcellular location is the cytosol. The protein localises to the nucleus speckle. The catalysed reaction is O-phospho-L-seryl-[protein] + H2O = L-seryl-[protein] + phosphate. The enzyme catalyses O-phospho-L-threonyl-[protein] + H2O = L-threonyl-[protein] + phosphate. In terms of biological role, plays a role in activating the myosin contractile function. Dephosphorylates threonine at 'Thr-1823', 'Thr-1833' and 'Thr-2029' in the C-terminal tail region of myosin II heavy chain (mhcA). Drives the assembly of dephosphorylated myosin II filaments to allow myosin recruitment into the cytoskeleton. This is Serine/threonine-protein phosphatase 2A catalytic subunit A (pho2a) from Dictyostelium discoideum (Social amoeba).